Consider the following 155-residue polypeptide: Non-secretory ribonuclease (155 aa).

The signal sequence occupies residues 1-25 (MGPKLLESRLCLLLLLGLVLMLASC). K33 is a binding site for substrate. H38 serves as the catalytic Proton acceptor. N-linked (GlcNAc...) asparagine glycosylation is present at N41. Intrachain disulfides connect C47–C106, C61–C118, C79–C133, and C86–C94. A 3'-nitrotyrosine modification is found at Y57. 62-66 (KDINT) contributes to the substrate binding site. N83, N88, and N107 each carry an N-linked (GlcNAc...) asparagine glycan. H150 acts as the Proton donor in catalysis.

The protein belongs to the pancreatic ribonuclease family. In terms of assembly, interacts with and forms a tight 1:1 complex with RNH1. Dimerization of two such complexes may occur.

It localises to the lysosome. Its subcellular location is the cytoplasmic granule. The enzyme catalyses an [RNA] containing cytidine + H2O = an [RNA]-3'-cytidine-3'-phosphate + a 5'-hydroxy-ribonucleotide-3'-[RNA].. It catalyses the reaction an [RNA] containing uridine + H2O = an [RNA]-3'-uridine-3'-phosphate + a 5'-hydroxy-ribonucleotide-3'-[RNA].. Functionally, this is a non-secretory ribonuclease. It is a pyrimidine specific nuclease with a slight preference for U. Cytotoxin and helminthotoxin. Possesses a wide variety of biological activities. In Mus musculus (Mouse), this protein is Non-secretory ribonuclease (Rnase2).